Here is a 316-residue protein sequence, read N- to C-terminus: Vacuolar membrane protein YNL058C (316 aa).

Residues 32–60 (KPTSSVVSETSSKSLPSLTSSAFSTSSGA) form a disordered region. Residues 93 to 113 (VYIAVGAVIGAIFISILIWWL) traverse the membrane as a helical segment. 3 positions are modified to phosphoserine: serine 148, serine 256, and serine 276. Positions 240-304 (EEEERKLNLN…KAHKRQAPSM (65 aa)) are disordered. Over residues 256–271 (SPERKEKKINSMEGYH) the composition is skewed to basic and acidic residues.

It belongs to the PRM5 family.

The protein localises to the vacuole membrane. The sequence is that of Vacuolar membrane protein YNL058C from Saccharomyces cerevisiae (strain ATCC 204508 / S288c) (Baker's yeast).